Here is a 372-residue protein sequence, read N- to C-terminus: Glutamate 5-kinase (372 aa).

Lysine 14 contributes to the ATP binding site. Serine 54, aspartate 141, and asparagine 153 together coordinate substrate. 173–174 (TD) lines the ATP pocket. The PUA domain occupies 280–358 (RGTLVLDAGA…DAIESILGYS (79 aa)).

Belongs to the glutamate 5-kinase family.

The protein localises to the cytoplasm. It carries out the reaction L-glutamate + ATP = L-glutamyl 5-phosphate + ADP. It functions in the pathway amino-acid biosynthesis; L-proline biosynthesis; L-glutamate 5-semialdehyde from L-glutamate: step 1/2. Its function is as follows. Catalyzes the transfer of a phosphate group to glutamate to form L-glutamate 5-phosphate. This Pseudomonas putida (strain GB-1) protein is Glutamate 5-kinase.